The following is a 384-amino-acid chain: Lipid-A-disaccharide synthase 1 (384 aa).

It belongs to the LpxB family.

It carries out the reaction a lipid X + a UDP-2-N,3-O-bis[(3R)-3-hydroxyacyl]-alpha-D-glucosamine = a lipid A disaccharide + UDP + H(+). Its pathway is bacterial outer membrane biogenesis; LPS lipid A biosynthesis. Functionally, condensation of UDP-2,3-diacylglucosamine and 2,3-diacylglucosamine-1-phosphate to form lipid A disaccharide, a precursor of lipid A, a phosphorylated glycolipid that anchors the lipopolysaccharide to the outer membrane of the cell. This Legionella pneumophila (strain Paris) protein is Lipid-A-disaccharide synthase 1.